The following is a 221-amino-acid chain: MAAPVCVNIQMLLEAAEYLERREREAEHGYASMLPYNSKERDGLKRKSKSKKSSNSRSTHNEMEKNRRAHLRLCLEKLKILVPLGPESNRHTTLSLLTRAKSHIKKLEDCDKRSLHQIEQLQREQRHLKRQLEKFGVERTRMDSIGSAMSSERSDSDREEIDVDVESTDYLTADLDWSSSSSSVSDLDERGSMQSICSDEGYSSSGLKRIELQDNPKITAL.

A Nuclear localization signal motif is present at residues 21–49 (RREREAEHGYASMLPYNSKERDGLKRKSK). Disordered stretches follow at residues 28-67 (HGYA…EKNR) and 176-202 (DWSS…DEGY). A bHLH domain is found at 55–107 (NSRSTHNEMEKNRRAHLRLCLEKLKILVPLGPESNRHTTLSLLTRAKSHIKKL). Over residues 192–202 (SMQSICSDEGY) the composition is skewed to polar residues.

Efficient DNA binding requires dimerization with another bHLH protein. Binds DNA as a heterodimer with MAX.

It localises to the nucleus. In terms of biological role, transcriptional repressor. MAD binds with MAX to form a sequence-specific DNA-binding protein complex which recognizes the core sequence 5'-CAC[GA]TG-3'. MAD thus antagonizes MYC transcriptional activity by competing for MAX. This Xenopus tropicalis (Western clawed frog) protein is Max dimerization protein 1 (mxd1).